A 260-amino-acid polypeptide reads, in one-letter code: Type III pantothenate kinase (260 aa).

Position 6–13 (6–13 (DAGNTRIK)) interacts with ATP. Residues tyrosine 100 and 107–110 (GADR) contribute to the substrate site. The Proton acceptor role is filled by aspartate 109. An ATP-binding site is contributed by threonine 133. Threonine 186 contacts substrate.

The protein belongs to the type III pantothenate kinase family. Homodimer. NH4(+) serves as cofactor. It depends on K(+) as a cofactor.

Its subcellular location is the cytoplasm. It catalyses the reaction (R)-pantothenate + ATP = (R)-4'-phosphopantothenate + ADP + H(+). It participates in cofactor biosynthesis; coenzyme A biosynthesis; CoA from (R)-pantothenate: step 1/5. Catalyzes the phosphorylation of pantothenate (Pan), the first step in CoA biosynthesis. This is Type III pantothenate kinase from Janthinobacterium sp. (strain Marseille) (Minibacterium massiliensis).